Consider the following 135-residue polypeptide: Ribonuclease P protein component (135 aa).

The tract at residues 115 to 135 (TNETVSPVSDTPLPQHERGSQ) is disordered.

Belongs to the RnpA family. As to quaternary structure, consists of a catalytic RNA component (M1 or rnpB) and a protein subunit.

It carries out the reaction Endonucleolytic cleavage of RNA, removing 5'-extranucleotides from tRNA precursor.. Its function is as follows. RNaseP catalyzes the removal of the 5'-leader sequence from pre-tRNA to produce the mature 5'-terminus. It can also cleave other RNA substrates such as 4.5S RNA. The protein component plays an auxiliary but essential role in vivo by binding to the 5'-leader sequence and broadening the substrate specificity of the ribozyme. This chain is Ribonuclease P protein component, found in Chloroflexus aurantiacus (strain ATCC 29366 / DSM 635 / J-10-fl).